Here is a 277-residue protein sequence, read N- to C-terminus: Large ribosomal subunit protein uL2 (277 aa).

The disordered stretch occupies residues 222 to 277 (GVAMNPVDHPHGGGEGRTSGGRHPVSPWGKPTKGKRTRSNKATDKFIMRSRHQRKK).

This sequence belongs to the universal ribosomal protein uL2 family. Part of the 50S ribosomal subunit. Forms a bridge to the 30S subunit in the 70S ribosome.

Its function is as follows. One of the primary rRNA binding proteins. Required for association of the 30S and 50S subunits to form the 70S ribosome, for tRNA binding and peptide bond formation. It has been suggested to have peptidyltransferase activity; this is somewhat controversial. Makes several contacts with the 16S rRNA in the 70S ribosome. The polypeptide is Large ribosomal subunit protein uL2 (Bartonella bacilliformis (strain ATCC 35685 / KC583 / Herrer 020/F12,63)).